Reading from the N-terminus, the 558-residue chain is Nuclear speckle splicing regulatory protein 1 (558 aa).

Residues 21–54 are disordered; sequence PVLQKPSVFGNDSDDDDETSVSESLQREAAKKQA. Phosphoserine occurs at positions 27 and 33. The stretch at 104-170 forms a coiled coil; it reads IHNLLKAVEI…REKRAAALEA (67 aa). Residues 106 to 170 are necessary for alternative splicing activity; sequence NLLKAVEIRK…REKRAAALEA (65 aa). Glycyl lysine isopeptide (Lys-Gly) (interchain with G-Cter in SUMO2) cross-links involve residues lysine 199 and lysine 210. The segment covering 204 to 215 has biased composition (basic and acidic residues); it reads EARSGIKEEKSR. The segment at 204–534 is disordered; sequence EARSGIKEEK…KRNNEETVMS (331 aa). Residues 216–226 show a composition bias toward polar residues; the sequence is GFSNEVSSKNR. Phosphoserine occurs at positions 248, 254, and 255. Basic and acidic residues predominate over residues 250-280; the sequence is FDAKSSADDEIEETRVNCRREKVIETPENDF. Threonine 275 carries the post-translational modification Phosphothreonine. Lysine 281 is covalently cross-linked (Glycyl lysine isopeptide (Lys-Gly) (interchain with G-Cter in SUMO2)). Residues 299–310 are compositionally biased toward basic residues; sequence STRHHTKGSRTS. Basic and acidic residues-rich tracts occupy residues 311–442, 449–487, and 501–517; these read RGHE…KREV, RNQD…RNQE, and RLTE…ERPP. Positions 379–427 form a coiled coil; sequence KREKDREKYSQREQERDRQQNDQNRPSEKGEKEEKSKAKEEHMKVRKER. Serine 457 is subject to Phosphoserine.

Belongs to the NSRP1 family. As to quaternary structure, interacts (via C-terminus) with SRSF1. Interacts (via C-terminus) with SRSF2. Expressed in dendritic cells, T-cells, B-cells and natural killer cells. Expressed in secondary lymphoid organs such as spleen and mesenteric, axillary and brachial lymph nodes.

The protein localises to the nucleus. It localises to the nucleus speckle. Its function is as follows. RNA-binding protein that mediates pre-mRNA alternative splicing regulation. The chain is Nuclear speckle splicing regulatory protein 1 (NSRP1) from Homo sapiens (Human).